We begin with the raw amino-acid sequence, 81 residues long: UPF0349 protein SE_0633 (81 aa).

This sequence belongs to the UPF0349 family.

In Staphylococcus epidermidis (strain ATCC 12228 / FDA PCI 1200), this protein is UPF0349 protein SE_0633.